The sequence spans 204 residues: Somatotropin (204 aa).

The N-terminal stretch at 1–17 (MDRAILLLSVLSVGVSS) is a signal peptide. Q18 carries the pyrrolidone carboxylic acid modification. H35 contributes to the Zn(2+) binding site. Residues C69 and C177 are joined by a disulfide bond. E186 lines the Zn(2+) pocket. Cysteines 194 and 202 form a disulfide.

This sequence belongs to the somatotropin/prolactin family.

Its subcellular location is the secreted. Its function is as follows. Growth hormone plays an important role in growth control and is involved in the regulation of several anabolic processes. Implicated as an osmoregulatory substance important for seawater adaptation. The protein is Somatotropin (gh) of Dicentrarchus labrax (European seabass).